The sequence spans 465 residues: ATP synthase subunit beta (465 aa).

Gly-148–Thr-155 lines the ATP pocket.

Belongs to the ATPase alpha/beta chains family. F-type ATPases have 2 components, CF(1) - the catalytic core - and CF(0) - the membrane proton channel. CF(1) has five subunits: alpha(3), beta(3), gamma(1), delta(1), epsilon(1). CF(0) has three main subunits: a(1), b(2) and c(9-12). The alpha and beta chains form an alternating ring which encloses part of the gamma chain. CF(1) is attached to CF(0) by a central stalk formed by the gamma and epsilon chains, while a peripheral stalk is formed by the delta and b chains.

Its subcellular location is the cell inner membrane. The enzyme catalyses ATP + H2O + 4 H(+)(in) = ADP + phosphate + 5 H(+)(out). Its function is as follows. Produces ATP from ADP in the presence of a proton gradient across the membrane. The catalytic sites are hosted primarily by the beta subunits. In Chromobacterium violaceum (strain ATCC 12472 / DSM 30191 / JCM 1249 / CCUG 213 / NBRC 12614 / NCIMB 9131 / NCTC 9757 / MK), this protein is ATP synthase subunit beta.